The chain runs to 205 residues: Recombination protein RecR (205 aa).

A C4-type zinc finger spans residues 60-75 (CKVCHNISDTETCRIC). Positions 83–178 (STICVVESIR…KLSVIARGIS (96 aa)) constitute a Toprim domain.

Belongs to the RecR family.

In terms of biological role, may play a role in DNA repair. It seems to be involved in an RecBC-independent recombinational process of DNA repair. It may act with RecF and RecO. This chain is Recombination protein RecR, found in Phocaeicola vulgatus (strain ATCC 8482 / DSM 1447 / JCM 5826 / CCUG 4940 / NBRC 14291 / NCTC 11154) (Bacteroides vulgatus).